The chain runs to 187 residues: Protein GrpE (187 aa).

The span at 1 to 17 (MSNEEQQQPNPAAQAPE) shows a compositional bias: low complexity. A disordered region spans residues 1-27 (MSNEEQQQPNPAAQAPEGAVTEGAAPE).

The protein belongs to the GrpE family. In terms of assembly, homodimer.

It is found in the cytoplasm. Functionally, participates actively in the response to hyperosmotic and heat shock by preventing the aggregation of stress-denatured proteins, in association with DnaK and GrpE. It is the nucleotide exchange factor for DnaK and may function as a thermosensor. Unfolded proteins bind initially to DnaJ; upon interaction with the DnaJ-bound protein, DnaK hydrolyzes its bound ATP, resulting in the formation of a stable complex. GrpE releases ADP from DnaK; ATP binding to DnaK triggers the release of the substrate protein, thus completing the reaction cycle. Several rounds of ATP-dependent interactions between DnaJ, DnaK and GrpE are required for fully efficient folding. The polypeptide is Protein GrpE (Thioalkalivibrio sulfidiphilus (strain HL-EbGR7)).